A 37-amino-acid polypeptide reads, in one-letter code: Large ribosomal subunit protein bL36c (37 aa).

Belongs to the bacterial ribosomal protein bL36 family.

Its subcellular location is the plastid. It localises to the chloroplast. In Pleurastrum terricola (Filamentous green alga), this protein is Large ribosomal subunit protein bL36c.